The primary structure comprises 438 residues: tRNA-2-methylthio-N(6)-dimethylallyladenosine synthase (438 aa).

In terms of domain architecture, MTTase N-terminal spans K4–A120. C13, C49, C83, C158, C162, and C165 together coordinate [4Fe-4S] cluster. One can recognise a Radical SAM core domain in the interval G144–E377. The TRAM domain maps to E377 to L438.

It belongs to the methylthiotransferase family. MiaB subfamily. As to quaternary structure, monomer. The cofactor is [4Fe-4S] cluster.

The protein localises to the cytoplasm. The enzyme catalyses N(6)-dimethylallyladenosine(37) in tRNA + (sulfur carrier)-SH + AH2 + 2 S-adenosyl-L-methionine = 2-methylsulfanyl-N(6)-dimethylallyladenosine(37) in tRNA + (sulfur carrier)-H + 5'-deoxyadenosine + L-methionine + A + S-adenosyl-L-homocysteine + 2 H(+). Its function is as follows. Catalyzes the methylthiolation of N6-(dimethylallyl)adenosine (i(6)A), leading to the formation of 2-methylthio-N6-(dimethylallyl)adenosine (ms(2)i(6)A) at position 37 in tRNAs that read codons beginning with uridine. This is tRNA-2-methylthio-N(6)-dimethylallyladenosine synthase from Trichlorobacter lovleyi (strain ATCC BAA-1151 / DSM 17278 / SZ) (Geobacter lovleyi).